A 382-amino-acid polypeptide reads, in one-letter code: Galactose-1-phosphate uridylyltransferase (382 aa).

Zn(2+) is bound by residues Cys52 and Cys55. UDP-alpha-D-glucose contacts are provided by residues Ala61 and 77–78 (ND). Residue His121 participates in Zn(2+) binding. Asn185 provides a ligand contact to UDP-alpha-D-glucose. Residue His196 coordinates Zn(2+). Catalysis depends on His198, which acts as the Tele-UMP-histidine intermediate. Residue Gln200 coordinates UDP-alpha-D-glucose. Residues Glu214, His313, His330, and His332 each contribute to the Fe cation site. UDP-alpha-D-glucose-binding positions include 345-348 (KFLV) and 350-351 (FE).

This sequence belongs to the galactose-1-phosphate uridylyltransferase type 1 family. In terms of assembly, homodimer. It depends on Zn(2+) as a cofactor.

It catalyses the reaction alpha-D-galactose 1-phosphate + UDP-alpha-D-glucose = alpha-D-glucose 1-phosphate + UDP-alpha-D-galactose. The protein operates within carbohydrate metabolism; galactose metabolism. In terms of biological role, essential for growth on galactose but not for cellulase induction. The sequence is that of Galactose-1-phosphate uridylyltransferase (gal7) from Hypocrea jecorina (Trichoderma reesei).